The following is a 1820-amino-acid chain: Sodium channel protein (1820 aa).

Over 1 to 117 the chain is Cytoplasmic; it reads MARKFSSARP…FNPIRRGAIR (117 aa). The stretch at 108–410 is one I repeat; sequence FNPIRRGAIR…VAMAYEEQNQ (303 aa). Residues 118-138 traverse the membrane as a helical segment; that stretch reads VFVNSAFNFFIMFTIFSNCIF. The Extracellular segment spans residues 139 to 149; it reads MTISNPPAWSK. Residues 150-171 form a helical membrane-spanning segment; it reads IVEYTFTGIYTFEVIVKVLSRG. Residues 172–176 lie on the Cytoplasmic side of the membrane; the sequence is FCIGH. Residues 177–197 traverse the membrane as a helical segment; it reads FTFLRDPWNWLDFSVVTMTYI. Topologically, residues 198 to 203 are extracellular; it reads TEFIDL. Residues 204 to 224 form a helical; Voltage-sensor membrane-spanning segment; that stretch reads RNVSALRTFRVLRALKTITIF. Residues 225–243 lie on the Cytoplasmic side of the membrane; the sequence is PGLKTIVRALIESMKQMGD. A helical membrane pass occupies residues 244–264; that stretch reads VVILTVFSLAVFTLAGMQLFM. Residues 265-346 lie on the Extracellular side of the membrane; that stretch reads GNLRHKCIRW…PNYGYTNYDN (82 aa). Cys271 and Cys324 form a disulfide bridge. N-linked (GlcNAc...) asparagine glycosylation is found at Asn278, Asn288, and Asn317. The tract at residues 285–342 is non-homologous region of repeat I; sequence SAYNTTFDFTAYIENEENQYFLDGALDALLCGNNSDAGKCPEGYTCMKAGRNPNYGYT. Residues 347-371 constitute an intramembrane region (pore-forming); it reads FAWTFLCLFRLMLQDYWENLYQMTL. The Extracellular portion of the chain corresponds to 372–378; sequence RAAGKSY. The chain crosses the membrane as a helical span at residues 379 to 402; that stretch reads MVFFIMVIFLGSFYLINLILAVVA. Residues 403–557 lie on the Cytoplasmic side of the membrane; that stretch reads MAYEEQNQAT…CCGPWVFLKK (155 aa). Residues 483 to 507 are disordered; that stretch reads SVKLSTEEQRSDSKSMDSKHSVDKP. The segment covering 487-507 has biased composition (basic and acidic residues); it reads STEEQRSDSKSMDSKHSVDKP. An II repeat occupies 548 to 811; it reads CCGPWVFLKK…EEDDEVNSLQ (264 aa). A helical transmembrane segment spans residues 558–578; it reads WVHFVMMDPFTDLFITLCIIL. Residues 579–599 are Extracellular-facing; that stretch reads NTLFMSIEHHPMNESFQSLLS. The N-linked (GlcNAc...) asparagine glycan is linked to Asn591. The helical transmembrane segment at 600 to 620 threads the bilayer; sequence AGNLVFTTIFAAEMVLKIIAL. The Cytoplasmic segment spans residues 621–625; that stretch reads DPYYY. A helical membrane pass occupies residues 626–643; it reads FQQTWNIFDSIIVSLSLL. Residues 644–650 lie on the Extracellular side of the membrane; that stretch reads ELGLSNM. A helical; Voltage-sensor membrane pass occupies residues 651–671; the sequence is QGMSVLRSLRLLRIFKLAKSW. The Cytoplasmic segment spans residues 672-690; the sequence is PTLNILIKIICNSVGALGN. Residues 691–711 form a helical membrane-spanning segment; it reads LTIVLAIIVFIFALVGFQLFG. The Extracellular portion of the chain corresponds to 712-734; sequence KNYKEYVCKISDDCELPRWHMND. An intramembrane region (pore-forming) is located at residues 735–755; sequence FFHSFLIVFRALCGEWIETMW. The Extracellular segment spans residues 756–766; it reads DCMEVGGVPMC. Cys757 and Cys766 form a disulfide bridge. A helical membrane pass occupies residues 767-790; that stretch reads LAVYMMVIIIGNLVMLNLFLALLL. The Cytoplasmic portion of the chain corresponds to 791–1004; sequence SSFSSDNLSS…TIVEHDYFET (214 aa). 2 disordered regions span residues 844–864 and 891–959; these read PPSDDVVGEEGDNEGKKDTLP and VKGE…SKDP. Over residues 896-910 the composition is skewed to acidic residues; the sequence is EIEEEGLVDSSDEED. Residues 924–935 are compositionally biased toward polar residues; it reads SVCSTVDYSPSE. Residues 942 to 953 show a composition bias toward acidic residues; sequence EEEEEEEEEPEE. One copy of the III repeat lies at 988 to 1295; it reads NLRRTCYTIV…KKYYNAMKKL (308 aa). Residues 1005–1025 form a helical membrane-spanning segment; the sequence is FIIFMILLSSGVLAFEDIYIW. The Extracellular portion of the chain corresponds to 1026–1037; sequence RRRVIKVILEYA. The chain crosses the membrane as a helical span at residues 1038–1058; that stretch reads DKVFTYVFIVEMLLKWVAYGF. The Cytoplasmic portion of the chain corresponds to 1059–1065; it reads KRYFTDA. A helical membrane pass occupies residues 1066-1086; it reads WCWLDFVIVGASIMGITSSLL. Topologically, residues 1087 to 1091 are extracellular; the sequence is GYEEL. The chain crosses the membrane as a helical; Voltage-sensor span at residues 1092-1112; the sequence is GAIKNLRTIRALRPLRALSRF. The Cytoplasmic portion of the chain corresponds to 1113-1131; sequence EGMKVVVRALLGAIPSIMN. Residues 1132–1152 traverse the membrane as a helical segment; sequence VLLVCLMFWLIFSIMGVNLFA. Residues 1153 to 1199 lie on the Extracellular side of the membrane; it reads GKFYRCINTTTDEILPVEEVNNRSDCMALMYTNEVRWVNLKVNYDNA. N-linked (GlcNAc...) asparagine glycosylation is found at Asn1160 and Asn1174. The tract at residues 1172 to 1194 is non-homologous region of repeat III; that stretch reads VNNRSDCMALMYTNEVRWVNLKV. The pore-forming intramembrane region spans 1200-1221; that stretch reads GMGYLSLLQVSTFKGWMDIMYA. Residues 1222–1243 are Extracellular-facing; sequence AVDSREVEDQPIYEINVYMYLY. The helical transmembrane segment at 1244–1264 threads the bilayer; that stretch reads FVIFIVFGAFFTLNLFIGVII. Residues 1265–1320 lie on the Cytoplasmic side of the membrane; sequence DNFNRQKQKLGGEDLFMTEEQKKYYNAMKKLGSKKAAKCIPRPSNVVQGVVYDIVT. The stretch at 1304–1602 is one IV repeat; the sequence is IPRPSNVVQG…WHKFDVHGTQ (299 aa). The helical transmembrane segment at 1321-1341 threads the bilayer; sequence QPFTDIFIMALICINMVAMMV. Topologically, residues 1342 to 1352 are extracellular; the sequence is ESEDQSQVKKD. A helical transmembrane segment spans residues 1353–1376; it reads ILSQINVIFVIIFTVECLLKLLAL. Over 1377–1380 the chain is Cytoplasmic; sequence RQYF. The chain crosses the membrane as a helical span at residues 1381–1398; it reads FTVGWNVFDFAVVVISII. Over 1399 to 1416 the chain is Extracellular; that stretch reads GLLLSDIIEKYFVSPTLF. The helical; Voltage-sensor transmembrane segment at 1417–1437 threads the bilayer; the sequence is RVIRLARIARVLRLIRAAKGI. The Cytoplasmic segment spans residues 1438-1453; sequence RTLLFALMMSLPALFN. The helical transmembrane segment at 1454–1474 threads the bilayer; sequence IGLLLFLIMFIFSIFGMSNFA. At 1475–1490 the chain is on the extracellular side; it reads YVKKQGGVDDIFNFET. Positions 1490-1505 are non-homologous region of repeat IV; sequence TFGNSMICLFEITTSA. The pore-forming intramembrane region spans 1491 to 1513; the sequence is FGNSMICLFEITTSAGWDGLLLP. The Extracellular segment spans residues 1514–1543; sequence TLNTGPPDCDPDVENPGTDVRGNCGNPGKG. The chain crosses the membrane as a helical span at residues 1544-1567; sequence ITFFCSYIILSFLVVVNMYIAIIL. The Cytoplasmic portion of the chain corresponds to 1568-1820; sequence ENFGVAQEES…GAIVVRESIV (253 aa).

This sequence belongs to the sodium channel (TC 1.A.1.10) family.

The protein resides in the cell membrane. Mediates the voltage-dependent sodium ion permeability of excitable membranes. Assuming opened or closed conformations in response to the voltage difference across the membrane, the protein forms a sodium-selective channel through which Na(+) ions may pass in accordance with their electrochemical gradient. The sequence is that of Sodium channel protein from Electrophorus electricus (Electric eel).